We begin with the raw amino-acid sequence, 122 residues long: Small ribosomal subunit protein uS13 (122 aa).

Positions 95 to 122 are disordered; the sequence is GLPVRGQRTHTNARTRKGKAKPIAGKKK.

This sequence belongs to the universal ribosomal protein uS13 family. Part of the 30S ribosomal subunit. Forms a loose heterodimer with protein S19. Forms two bridges to the 50S subunit in the 70S ribosome.

Located at the top of the head of the 30S subunit, it contacts several helices of the 16S rRNA. In the 70S ribosome it contacts the 23S rRNA (bridge B1a) and protein L5 of the 50S subunit (bridge B1b), connecting the 2 subunits; these bridges are implicated in subunit movement. Contacts the tRNAs in the A and P-sites. The chain is Small ribosomal subunit protein uS13 from Sphingopyxis alaskensis (strain DSM 13593 / LMG 18877 / RB2256) (Sphingomonas alaskensis).